A 576-amino-acid chain; its full sequence is Rho GTPase-activating protein gacP (576 aa).

Residues 123–189 (LKSIIKTELK…RTNFERVGID (67 aa)) are a coiled coil. Positions 277–462 (EDLSVLLNRE…TIIQNFDRIF (186 aa)) constitute a Rho-GAP domain. Residues 472–576 (VPDTYVPPPN…DEGDAVELSD (105 aa)) form a disordered region. Over residues 482–500 (NTRNNSVNNFNNVQPSSFS) the composition is skewed to low complexity. The span at 501–513 (ASTSRSINLNKST) shows a compositional bias: polar residues. Over residues 514–530 (NNPNINDDNNNNNNINN) the composition is skewed to low complexity. A compositionally biased stretch (acidic residues) spans 565-576 (SFDEGDAVELSD).

The protein resides in the cytoplasm. Functionally, rho GTPase-activating protein involved in the signal transduction pathway. In Dictyostelium discoideum (Social amoeba), this protein is Rho GTPase-activating protein gacP (gacP).